A 237-amino-acid polypeptide reads, in one-letter code: Purine nucleoside phosphorylase DeoD-type (237 aa).

His-4 serves as a coordination point for a purine D-ribonucleoside. Residues Gly-20, Arg-24, Arg-43, and 87–90 (RVGT) contribute to the phosphate site. A purine D-ribonucleoside-binding positions include 179-181 (EME) and 203-204 (SD). Asp-204 serves as the catalytic Proton donor.

The protein belongs to the PNP/UDP phosphorylase family. As to quaternary structure, homohexamer; trimer of homodimers.

It carries out the reaction a purine D-ribonucleoside + phosphate = a purine nucleobase + alpha-D-ribose 1-phosphate. The catalysed reaction is a purine 2'-deoxy-D-ribonucleoside + phosphate = a purine nucleobase + 2-deoxy-alpha-D-ribose 1-phosphate. Catalyzes the reversible phosphorolytic breakdown of the N-glycosidic bond in the beta-(deoxy)ribonucleoside molecules, with the formation of the corresponding free purine bases and pentose-1-phosphate. The protein is Purine nucleoside phosphorylase DeoD-type of Exiguobacterium sp. (strain ATCC BAA-1283 / AT1b).